The chain runs to 196 residues: GTP cyclohydrolase-2 (196 aa).

49 to 53 (RVHSE) contacts GTP. Cysteine 54, cysteine 65, and cysteine 67 together coordinate Zn(2+). GTP is bound by residues glutamine 70, 92 to 94 (EGR), and threonine 114. Residue aspartate 126 is the Proton acceptor of the active site. The Nucleophile role is filled by arginine 128. GTP is bound by residues threonine 149 and lysine 154.

Belongs to the GTP cyclohydrolase II family. As to quaternary structure, homodimer. Zn(2+) serves as cofactor.

The catalysed reaction is GTP + 4 H2O = 2,5-diamino-6-hydroxy-4-(5-phosphoribosylamino)-pyrimidine + formate + 2 phosphate + 3 H(+). It functions in the pathway cofactor biosynthesis; riboflavin biosynthesis; 5-amino-6-(D-ribitylamino)uracil from GTP: step 1/4. Catalyzes the conversion of GTP to 2,5-diamino-6-ribosylamino-4(3H)-pyrimidinone 5'-phosphate (DARP), formate and pyrophosphate. The protein is GTP cyclohydrolase-2 of Citrobacter koseri (strain ATCC BAA-895 / CDC 4225-83 / SGSC4696).